A 775-amino-acid polypeptide reads, in one-letter code: MIARPARDVLSSATKKQFRFRGCLAARHEPYHTSTSRAGQVAILPATTDDKTLVSVFDSPRSNAKLSAFATTGLFNHSTVTHPRALNSIAQGTLIRAHVLTNRILRAKESREELFKVVKNLDRLSDMLCSVIDLCELVRNSHPDRAWVEAANDAYEGLCQTMNELNTHVGLYDVLKIVLSDPEIVKSLSPEAYRTAMIFWNDFEKSAINLPAKEREEFVALSSEIISLGRMFLEETTAARPPAKIPPSDLAGLKDKGMGVRLQLQAQFTQRDLHVYPGSLQAQMIMRSAPAEEARRRVYIASHSSTPEQIELLERMLSTRARLARLVGRESFAAMALDDKMAKNPTNVARFLDSLMDRSRPYARRALRNLSMRKQEHLHTPPFPTIQAWDRDYYCPPEPPAPPIPLPRLTFGTVLMGLSRLFRHLYGIHLRPVKPIAGEVWHSDVHKLEVVDEERGVIGLIYADVFARRGKASGAAHYTVRCSRRTDDDDVQGDNDELTRMYPDLIKQSEEFEAVGRGPIPGLPGTYQQPLVVLLCEFARPSLGAAVLEWHEVMTLFHEMGHAMHSMIGRTEYQNVSGTRCPTDFVELPSILMEHFLNSRQVLSLFHADSTSSSSQPIGNHDEDPCHSIDTYAQIMLAALDQIYHSPAALQPGFDSTRKLARLHDEKGLIPYVPGTSFQTQFGHLFGYGATYYSYLFDRAIASRVWKDVFSSSPLSRETGERYKQEVLRYGGGKDPWEMVSALLKAPELASGDAEAMATVGRWKIEDEVGLPGRH.

The transit peptide at 1–28 directs the protein to the mitochondrion; sequence MIARPARDVLSSATKKQFRFRGCLAARH. Residue histidine 558 coordinates Zn(2+). The active site involves glutamate 559. Histidine 562 and histidine 565 together coordinate Zn(2+).

This sequence belongs to the peptidase M3 family. The cofactor is Zn(2+).

Its subcellular location is the mitochondrion matrix. The catalysed reaction is Release of an N-terminal octapeptide as second stage of processing of some proteins imported into the mitochondrion.. Cleaves proteins, imported into the mitochondrion, to their mature size. While most mitochondrial precursor proteins are processed to the mature form in one step by mitochondrial processing peptidase (MPP), the sequential cleavage by MIP of an octapeptide after initial processing by MPP is a required step for a subgroup of nuclear-encoded precursor proteins destined for the matrix or the inner membrane. In Schizophyllum commune (Split gill fungus), this protein is Mitochondrial intermediate peptidase (OCT1).